The sequence spans 529 residues: Protein PNS1 (529 aa).

The segment at Met-1–Gly-58 is disordered. Residues Met-1–Pro-84 are Cytoplasmic-facing. The segment covering Pro-22 to Pro-48 has biased composition (low complexity). The helical transmembrane segment at Ile-85–Leu-105 threads the bilayer. Topologically, residues Arg-106–Ala-132 are extracellular. N-linked (GlcNAc...) asparagine glycosylation occurs at Asn-114. A helical transmembrane segment spans residues Ile-133–Val-153. The Cytoplasmic segment spans residues Arg-154–Lys-158. A helical transmembrane segment spans residues Ile-159–Leu-179. At Trp-180–Asn-184 the chain is on the extracellular side. Residues Thr-185 to Met-205 traverse the membrane as a helical segment. Over Arg-206–Tyr-230 the chain is Cytoplasmic. Residues Val-231–Val-251 form a helical membrane-spanning segment. At Val-252–Asn-271 the chain is on the extracellular side. A glycan (N-linked (GlcNAc...) asparagine) is linked at Asn-271. The helical transmembrane segment at Ala-272–Ile-292 threads the bilayer. Residues Lys-293–Asn-294 lie on the Cytoplasmic side of the membrane. A helical membrane pass occupies residues Ile-295–Ala-315. The Extracellular portion of the chain corresponds to Asn-316–Ser-325. The helical transmembrane segment at Met-326–Leu-346 threads the bilayer. Topologically, residues Arg-347–Asp-362 are cytoplasmic. A helical membrane pass occupies residues Met-363–Val-383. The Extracellular segment spans residues Asp-384–Asn-427. Residue Asn-422 is glycosylated (N-linked (GlcNAc...) asparagine). Residues Ile-428 to Tyr-448 traverse the membrane as a helical segment. Residues Glu-449–Tyr-464 lie on the Cytoplasmic side of the membrane. A helical transmembrane segment spans residues Ser-465–Gly-485. Over Ser-486–His-529 the chain is Extracellular.

Belongs to the CTL (choline transporter-like) family.

It is found in the cell membrane. In terms of biological role, probably involved in transport through the plasma membrane. The sequence is that of Protein PNS1 (PNS1) from Mycosarcoma maydis (Corn smut fungus).